A 174-amino-acid chain; its full sequence is Protein-lysine myristoyltransferase HlyC (174 aa).

Active-site residues include His23 and Asp92. Residue His151 coordinates heme.

It belongs to the RTX toxin acyltransferase family. As to quaternary structure, monomer. Proteolytically cleaved by the protease systems ClpAP, ClpXP and FtsH, leading to its degradation.

Its subcellular location is the cytoplasm. It catalyses the reaction tetradecanoyl-[ACP] + L-lysyl-[protein] = N(6)-tetradecanoyl-L-lysyl-[protein] + holo-[ACP] + H(+). The acyltransferase activity is inhibited by heme. Protein-lysine myristoyltransferase that catalyzes myristoylation of the protoxin (HlyA) at two internal lysine residues, thereby converting it to the active toxin. In Escherichia coli, this protein is Protein-lysine myristoyltransferase HlyC.